Consider the following 275-residue polypeptide: Cytochrome c oxidase subunit 3 (275 aa).

7 helical membrane passes run 22 to 42 (PWPL…VMYF), 52 to 72 (SGAL…ALWF), 96 to 116 (GVAL…WAFF), 132 to 152 (PVGI…ILLL), 173 to 193 (AILG…CQGI), 211 to 231 (FFFS…FIAV), and 253 to 273 (ILYW…VYWW).

This sequence belongs to the cytochrome c oxidase subunit 3 family. In terms of assembly, component of the cytochrome c oxidase (complex IV, CIV), a multisubunit enzyme composed of a catalytic core of 3 subunits and several supernumerary subunits. The complex exists as a monomer or a dimer and forms supercomplexes (SCs) in the inner mitochondrial membrane with ubiquinol-cytochrome c oxidoreductase (cytochrome b-c1 complex, complex III, CIII).

The protein resides in the mitochondrion inner membrane. It carries out the reaction 4 Fe(II)-[cytochrome c] + O2 + 8 H(+)(in) = 4 Fe(III)-[cytochrome c] + 2 H2O + 4 H(+)(out). Functionally, component of the cytochrome c oxidase, the last enzyme in the mitochondrial electron transport chain which drives oxidative phosphorylation. The respiratory chain contains 3 multisubunit complexes succinate dehydrogenase (complex II, CII), ubiquinol-cytochrome c oxidoreductase (cytochrome b-c1 complex, complex III, CIII) and cytochrome c oxidase (complex IV, CIV), that cooperate to transfer electrons derived from NADH and succinate to molecular oxygen, creating an electrochemical gradient over the inner membrane that drives transmembrane transport and the ATP synthase. Cytochrome c oxidase is the component of the respiratory chain that catalyzes the reduction of oxygen to water. Electrons originating from reduced cytochrome c in the intermembrane space (IMS) are transferred via the dinuclear copper A center (CU(A)) of subunit 2 and heme A of subunit 1 to the active site in subunit 1, a binuclear center (BNC) formed by heme A3 and copper B (CU(B)). The BNC reduces molecular oxygen to 2 water molecules using 4 electrons from cytochrome c in the IMS and 4 protons from the mitochondrial matrix. The protein is Cytochrome c oxidase subunit 3 (COX3) of Mycosarcoma maydis (Corn smut fungus).